Reading from the N-terminus, the 371-residue chain is Cytochrome b (371 aa).

Transmembrane regions (helical) follow at residues 25–45 (FGSMLLTCSALQVMTGFFLSM), 69–90 (WMMQNLHAIGASMFFICIYMHI), 105–125 (WLSGTTLLIMLMATAFFGYVL), and 170–190 (FFALHFILPFGIISMSSVHIM). Residues H75 and H89 each coordinate heme b. Positions 174 and 188 each coordinate heme b. H193 is a binding site for a ubiquinone. A run of 4 helical transmembrane segments spans residues 218–238 (YKDLLVISMMIITVLLTVSFF), 280–300 (LGGALALVMSIMILLTMPFTH), 312–332 (LMQFMFWTLVATFTVITWTAT), and 339–358 (FTTISQVASIIYFMFFMSNP).

This sequence belongs to the cytochrome b family. As to quaternary structure, the cytochrome bc1 complex contains 3 respiratory subunits (MT-CYB, CYC1 and UQCRFS1), 2 core proteins (UQCRC1 and UQCRC2) and probably 6 low-molecular weight proteins. It depends on heme b as a cofactor.

It is found in the mitochondrion inner membrane. Its function is as follows. Component of the ubiquinol-cytochrome c reductase complex (complex III or cytochrome b-c1 complex) that is part of the mitochondrial respiratory chain. The b-c1 complex mediates electron transfer from ubiquinol to cytochrome c. Contributes to the generation of a proton gradient across the mitochondrial membrane that is then used for ATP synthesis. This is Cytochrome b (MT-CYB) from Candoia carinata (Papuan tree boa).